A 194-amino-acid polypeptide reads, in one-letter code: Ribosomal RNA large subunit methyltransferase E (194 aa).

The S-adenosyl-L-methionine site is built by G48, W50, D66, N82, and D110. The active-site Proton acceptor is the K150.

This sequence belongs to the class I-like SAM-binding methyltransferase superfamily. RNA methyltransferase RlmE family.

Its subcellular location is the cytoplasm. It carries out the reaction uridine(2552) in 23S rRNA + S-adenosyl-L-methionine = 2'-O-methyluridine(2552) in 23S rRNA + S-adenosyl-L-homocysteine + H(+). In terms of biological role, specifically methylates the uridine in position 2552 of 23S rRNA at the 2'-O position of the ribose in the fully assembled 50S ribosomal subunit. The sequence is that of Ribosomal RNA large subunit methyltransferase E from Picrophilus torridus (strain ATCC 700027 / DSM 9790 / JCM 10055 / NBRC 100828 / KAW 2/3).